Consider the following 141-residue polypeptide: Large ribosomal subunit protein uL11A (141 aa).

This sequence belongs to the universal ribosomal protein uL11 family. In terms of assembly, part of the ribosomal stalk of the 50S ribosomal subunit. Interacts with L10 and the large rRNA to form the base of the stalk. L10 forms an elongated spine to which L12 dimers bind in a sequential fashion forming a multimeric L10(L12)X complex. Post-translationally, one or more lysine residues are methylated.

In terms of biological role, forms part of the ribosomal stalk which helps the ribosome interact with GTP-bound translation factors. This is Large ribosomal subunit protein uL11A from Bacillus cereus (strain ATCC 14579 / DSM 31 / CCUG 7414 / JCM 2152 / NBRC 15305 / NCIMB 9373 / NCTC 2599 / NRRL B-3711).